We begin with the raw amino-acid sequence, 728 residues long: Phomopsene synthase (728 aa).

The interval 1–327 is terpene cyclase; the sequence is MEYRYSYVID…PRYHSDQSLD (327 aa). The Mg(2+) site is built by aspartate 94 and aspartate 98. Residues aspartate 94, aspartate 98, 181–184, asparagine 226, 230–234, and 319–320 contribute to the substrate site; these read RIVD, SWEKE, and RY. The DDXXD 1 signature appears at 94–98; that stretch reads DDLVD. The short motif at 226 to 234 is the NSE/DTE element; the sequence is NDVQSWEKE. The interval 328–728 is prenyltransferase; it reads EMMVARMKYG…FRFLLSLLKV (401 aa). Positions 352 to 363 are enriched in basic and acidic residues; sequence ENRGTKRTHQDD. The tract at residues 352 to 379 is disordered; it reads ENRGTKRTHQDDTEGVQSVKRFNGASTK. Tandem repeats lie at residues 381-386, 387-392, and 393-398. The segment at 381 to 398 is 3 X 6 AA approximate tandem repeats; it reads GINGTNGINGLNGINGSN. Residues lysine 447, arginine 450, and histidine 479 each coordinate isopentenyl diphosphate. Mg(2+) is bound by residues aspartate 486 and aspartate 490. A DDXXD 2 motif is present at residues 486-490; sequence DDVQD. Arginine 495 lines the dimethylallyl diphosphate pocket. Position 496 (arginine 496) interacts with isopentenyl diphosphate. Positions 574, 575, 610, 617, 627, and 637 each coordinate dimethylallyl diphosphate.

The protein in the N-terminal section; belongs to the terpene synthase family. It in the C-terminal section; belongs to the FPP/GGPP synthase family. As to quaternary structure, hexamer. It depends on Mg(2+) as a cofactor.

It carries out the reaction isopentenyl diphosphate + (2E,6E)-farnesyl diphosphate = (2E,6E,10E)-geranylgeranyl diphosphate + diphosphate. It functions in the pathway secondary metabolite biosynthesis; terpenoid biosynthesis. In terms of biological role, bifunctional terpene synthase; part of the gene cluster that mediates the biosynthesis of the diterpene methyl phomopsenonate. At first, the universal precursor of diterpene, geranylgeranyl diphosphate (GGPP) is provided and is cyclized by the unusual bifunctional terpene synthase PaPS to give phomopsene. The C-terminal prenyltransferase domain of PaPS catalyzes formation of GGPP, whereas the N-terminal terpene cyclase domain catalyzes the cyclization of GGPP to phomopsene. Since the oxidation of a methylgroup to a carboxyl group is frequently catalyzed by a cytochrome P450 monooxygenase, the C-16 methyl group would be oxidized by the cluster-specific cytochrome P450 monooxygenase ORF3. Subsequently, oxidation of the allylic position and methylation of the carboxyl group may give methyl phomopsenonate. Although further study is necessary to identify genes such as a monooxygenase and a methyltransferase, the predicted functions of genes on the cluster are correlated with the structure of methyl phomopsenonate. The polypeptide is Phomopsene synthase (Phomopsis amygdali (Fusicoccum amygdali)).